We begin with the raw amino-acid sequence, 312 residues long: DNA-directed RNA polymerase subunit alpha (312 aa).

Positions 1–229 are alpha N-terminal domain (alpha-NTD); it reads MLQYQIDRID…ELFQPLATVT (229 aa). The interval 240-312 is alpha C-terminal domain (alpha-CTD); that stretch reads PSPEAQIPLE…ISIPQSRTSV (73 aa).

It belongs to the RNA polymerase alpha chain family. In cyanobacteria the RNAP catalytic core is composed of 2 alpha, 1 beta, 1 beta', 1 gamma and 1 omega subunit. When a sigma factor is associated with the core the holoenzyme is formed, which can initiate transcription.

It carries out the reaction RNA(n) + a ribonucleoside 5'-triphosphate = RNA(n+1) + diphosphate. Functionally, DNA-dependent RNA polymerase catalyzes the transcription of DNA into RNA using the four ribonucleoside triphosphates as substrates. The polypeptide is DNA-directed RNA polymerase subunit alpha (Prochlorococcus marinus (strain AS9601)).